Reading from the N-terminus, the 378-residue chain is D-alanine--D-alanine ligase (378 aa).

Positions 157–368 constitute an ATP-grasp domain; it reads KVVFESAGLS…YGDLIDELIH (212 aa). An ATP-binding site is contributed by 189–244; the sequence is VDKLGFPVFVKPARAGSSMGISKVDSMEGLDAAIDEARRHDLKLVIEAGIVGREIE. Asp-322, Glu-335, and Asn-337 together coordinate Mg(2+).

This sequence belongs to the D-alanine--D-alanine ligase family. The cofactor is Mg(2+). Requires Mn(2+) as cofactor.

It is found in the cytoplasm. It catalyses the reaction 2 D-alanine + ATP = D-alanyl-D-alanine + ADP + phosphate + H(+). The protein operates within cell wall biogenesis; peptidoglycan biosynthesis. Its function is as follows. Cell wall formation. The sequence is that of D-alanine--D-alanine ligase from Paenarthrobacter aurescens (strain TC1).